The following is a 219-amino-acid chain: Claudin-3 (219 aa).

The Cytoplasmic segment spans residues 1-8; the sequence is MSMGLEIT. A helical transmembrane segment spans residues 9-29; the sequence is GTSLAVLGWLCTIVCCALPMW. The Extracellular segment spans residues 30–80; sequence RVSAFIGSSIITAQITWEGLWMNCVVQSTGQMQCKMYDSLLALPQDLQAAR. The helical transmembrane segment at 81–101 threads the bilayer; it reads ALIVVSILLAAFGLLVALVGA. Residues 102 to 115 are Cytoplasmic-facing; sequence QCTNCVQDETAKAK. A helical transmembrane segment spans residues 116-136; it reads ITIVAGVLFLLAAVLTLVPVS. Residues 137–161 are Extracellular-facing; sequence WSANTIIRDFYNPLVPEAQKREMGT. Residues 162-182 traverse the membrane as a helical segment; the sequence is GLYVGWAAAALQLLGGALLCC. Residues 183 to 219 lie on the Cytoplasmic side of the membrane; that stretch reads SCPPREKYAPTKILYSAPRSTGPGTGTGTAYDRKDYV. At Y197 the chain carries Phosphotyrosine. The residue at position 198 (S198) is a Phosphoserine. Positions 218 to 219 are interactions with TJP1, TJP2 and TJP3; that stretch reads YV.

Belongs to the claudin family. Can form homo- and heteropolymers with other CLDN. Homopolymers interact with CLDN1 and CLDN2 homopolymers. Interacts in cis (within the same plasma membrane) with CLDN19. Directly interacts with TJP1/ZO-1, TJP2/ZO-2 and TJP3/ZO-3.

It localises to the cell junction. The protein resides in the tight junction. Its subcellular location is the cell membrane. In terms of biological role, plays a major role in tight junction-specific obliteration of the intercellular space, through calcium-independent cell-adhesion activity. The protein is Claudin-3 (Cldn3) of Rattus norvegicus (Rat).